The following is a 540-amino-acid chain: Chaperonin GroEL (540 aa).

ATP-binding positions include 30-33, Lys-51, 87-91, Gly-415, 479-481, and Asp-495; these read TLAP, DGTTT, and NAA.

Belongs to the chaperonin (HSP60) family. As to quaternary structure, forms a cylinder of 14 subunits composed of two heptameric rings stacked back-to-back. Interacts with the co-chaperonin GroES.

It localises to the cytoplasm. It carries out the reaction ATP + H2O + a folded polypeptide = ADP + phosphate + an unfolded polypeptide.. Its function is as follows. Together with its co-chaperonin GroES, plays an essential role in assisting protein folding. The GroEL-GroES system forms a nano-cage that allows encapsulation of the non-native substrate proteins and provides a physical environment optimized to promote and accelerate protein folding. In Methylovorus sp. (strain SS1 / DSM 11726), this protein is Chaperonin GroEL.